The following is a 177-amino-acid chain: Large ribosomal subunit protein uL6 (177 aa).

The span at 154–171 (PEPYKGKGVRYADEQVRR) shows a compositional bias: basic and acidic residues. The interval 154–177 (PEPYKGKGVRYADEQVRRKEAKKK) is disordered.

It belongs to the universal ribosomal protein uL6 family. As to quaternary structure, part of the 50S ribosomal subunit.

This protein binds to the 23S rRNA, and is important in its secondary structure. It is located near the subunit interface in the base of the L7/L12 stalk, and near the tRNA binding site of the peptidyltransferase center. The protein is Large ribosomal subunit protein uL6 of Marinobacter nauticus (strain ATCC 700491 / DSM 11845 / VT8) (Marinobacter aquaeolei).